We begin with the raw amino-acid sequence, 118 residues long: Class I hydrophobin 1 (118 aa).

The first 20 residues, 1 to 20, serve as a signal peptide directing secretion; it reads MFARLSTALLAFTLATAVVA. Disulfide bonds link cysteine 34–cysteine 97, cysteine 41–cysteine 91, cysteine 42–cysteine 77, and cysteine 98–cysteine 111. Residue asparagine 54 is glycosylated (N-linked (GlcNAc...) asparagine). A glycan (N-linked (GlcNAc...) asparagine) is linked at asparagine 115.

This sequence belongs to the fungal hydrophobin family. In terms of assembly, self-assembles to form functional amyloid fibrils called rodlets. Self-assembly into fibrillar rodlets occurs spontaneously at hydrophobic:hydrophilic interfaces and the rodlets further associate laterally to form amphipathic monolayers.

It is found in the secreted. It localises to the cell wall. Aerial growth, conidiation, and dispersal of filamentous fungi in the environment rely upon a capability of their secreting small amphipathic proteins called hydrophobins (HPBs) with low sequence identity. Class I can self-assemble into an outermost layer of rodlet bundles on aerial cell surfaces, conferring cellular hydrophobicity that supports fungal growth, development and dispersal; whereas Class II form highly ordered films at water-air interfaces through intermolecular interactions but contribute nothing to the rodlet structure. This Coprinopsis cinerea (strain Okayama-7 / 130 / ATCC MYA-4618 / FGSC 9003) (Inky cap fungus) protein is Class I hydrophobin 1.